Here is a 573-residue protein sequence, read N- to C-terminus: 2-succinyl-5-enolpyruvyl-6-hydroxy-3-cyclohexene-1-carboxylate synthase (573 aa).

It belongs to the TPP enzyme family. MenD subfamily. As to quaternary structure, homodimer. It depends on Mg(2+) as a cofactor. Requires Mn(2+) as cofactor. Thiamine diphosphate serves as cofactor.

The enzyme catalyses isochorismate + 2-oxoglutarate + H(+) = 5-enolpyruvoyl-6-hydroxy-2-succinyl-cyclohex-3-ene-1-carboxylate + CO2. It participates in quinol/quinone metabolism; 1,4-dihydroxy-2-naphthoate biosynthesis; 1,4-dihydroxy-2-naphthoate from chorismate: step 2/7. Its pathway is quinol/quinone metabolism; menaquinone biosynthesis. Catalyzes the thiamine diphosphate-dependent decarboxylation of 2-oxoglutarate and the subsequent addition of the resulting succinic semialdehyde-thiamine pyrophosphate anion to isochorismate to yield 2-succinyl-5-enolpyruvyl-6-hydroxy-3-cyclohexene-1-carboxylate (SEPHCHC). This Shewanella sp. (strain ANA-3) protein is 2-succinyl-5-enolpyruvyl-6-hydroxy-3-cyclohexene-1-carboxylate synthase.